The chain runs to 623 residues: (-)-limonene synthase TPS1, chloroplastic (623 aa).

The N-terminal 60 residues, 1-60 (MQCIAFHQFASSSSLPIWSSIDNRFTPKTSITSISKPKPKLKSKSNLKSRSRSSTCYPIQ), are a transit peptide targeting the chloroplast. The tract at residues 29-52 (TSITSISKPKPKLKSKSNLKSRSR) is disordered. Residues 37 to 51 (PKPKLKSKSNLKSRS) are compositionally biased toward basic residues. Residues arginine 337, aspartate 374, aspartate 378, arginine 516, and aspartate 519 each contribute to the (2E)-geranyl diphosphate site. Mg(2+) is bound by residues aspartate 374 and aspartate 378. Positions 374 to 378 (DDMHD) match the DDXXD motif motif. The Mg(2+) site is built by aspartate 519, threonine 523, and glutamate 527.

The protein belongs to the terpene synthase family. Tpsb subfamily. The cofactor is Mg(2+). Mn(2+) is required as a cofactor. K(+) serves as cofactor. As to expression, trichome.

The protein resides in the plastid. The protein localises to the chloroplast. It catalyses the reaction (2E)-geranyl diphosphate = (4S)-limonene + diphosphate. The catalysed reaction is (2E)-geranyl diphosphate = terpinolene + diphosphate. The enzyme catalyses (2E)-geranyl diphosphate = (1R,5R)-alpha-pinene + diphosphate. It carries out the reaction (2E)-geranyl diphosphate = (1R,5R)-beta-pinene + diphosphate. It catalyses the reaction (2E)-geranyl diphosphate = beta-myrcene + diphosphate. The catalysed reaction is (2E)-geranyl diphosphate = (4R)-limonene + diphosphate. The protein operates within secondary metabolite biosynthesis; terpenoid biosynthesis. Its pathway is terpene metabolism; (4S)-limonene biosynthesis; (4S)-limonene from geranyl diphosphate: step 1/1. In terms of biological role, involved in monoterpene (C10) olefins biosynthesis, constituants of cannabinoids and terpenoids-rich resins. Catalyzes mainly the conversion of (2E)-geranyl diphosphate to (-)-limonene, and also produces minor products such as (+)-limonene, (+)-alpha-pinene, terpinolene, (+)-beta-pinene and beta-myrcene. This chain is (-)-limonene synthase TPS1, chloroplastic, found in Cannabis sativa (Hemp).